The sequence spans 165 residues: Putative 1,2-phenylacetyl-CoA epoxidase, subunit D (165 aa).

As to quaternary structure, monomer.

It functions in the pathway aromatic compound metabolism; phenylacetate degradation. Functionally, possible component of 1,2-phenylacetyl-CoA epoxidase multicomponent enzyme system which catalyzes the reduction of phenylacetyl-CoA (PA-CoA) to form 1,2-epoxyphenylacetyl-CoA. The subunit D may have a function related to the maturation of the monooxygenase complex, rather than direct involvement in catalysis. PaaD could assist either in maturation of PaaE or PaaA. This is Putative 1,2-phenylacetyl-CoA epoxidase, subunit D (paaD) from Escherichia coli (strain K12).